The chain runs to 706 residues: Axin-related protein (706 aa).

The RGS domain occupies 72–191; sequence SLNLLLDDQD…LQSDICKEYA (120 aa). Disordered stretches follow at residues 278–298, 400–482, and 585–605; these read MTDG…REIH, TPAN…GTSA, and STTL…GFST. Polar residues predominate over residues 402 to 412; that stretch reads ANLSPRSQSPF. Residues 453 to 462 are compositionally biased toward low complexity; it reads RSSVSSQLPR. The 83-residue stretch at 624-706 folds into the DIX domain; that stretch reads GQGLAIVYYF…KIICKVERAC (83 aa).

Interacts with dvl2/dsh via DIX domains in both proteins. Forms a complex with ctnnb1/beta-catenin and gsk3b. Also forms heterodimers with mouse Axin1.

It localises to the cytoplasm. The protein localises to the cytoplasmic vesicle. Regulates the wnt signaling pathway by interacting with dvl2/dsh, which displaces gsk3b from the axnr-gsk3b complex and thus prevents degradation of ctnnb1/beta-catenin. The protein is Axin-related protein of Xenopus laevis (African clawed frog).